The following is a 271-amino-acid chain: N-acetyltransferase ECO1 (271 aa).

Residues 1–38 are disordered; the sequence is MKTYRAKRKYLSESEDDVFSSSPTQSPETSPLQPPNES. Positions 20 to 31 are enriched in low complexity; that stretch reads SSSPTQSPETSP. Residues 80–104 form a CCHH-type zinc finger; sequence TTCKTCGMTYQVAYGPDISAHKSFH.

It belongs to the acetyltransferase family. ECO subfamily.

It is found in the nucleus. Functionally, probable acetyltransferase required for the establishment of sister chromatid cohesion and couple the processes of cohesion and DNA replication to ensure that only sister chromatids become paired together. In contrast to the structural cohesins, the deposition and establishment factors are required only during S phase. Acts by acetylating the cohesin complex component SMC3. The polypeptide is N-acetyltransferase ECO1 (ECO1) (Yarrowia lipolytica (strain CLIB 122 / E 150) (Yeast)).